Reading from the N-terminus, the 309-residue chain is Dehydrogenase/reductase SDR family member 7B (309 aa).

The Cytoplasmic portion of the chain corresponds to Met-1 to Leu-5. A helical; Signal-anchor for type II membrane protein membrane pass occupies residues Gly-6–Ile-26. Topologically, residues Gln-27–Asp-271 are lumenal. Residues Ser-47 and Leu-49 each contribute to the NAD(+) site. Ser-179 contacts substrate. The NAD(+) site is built by Tyr-192, Lys-196, and Thr-227. The Proton acceptor role is filled by Tyr-192.

It belongs to the short-chain dehydrogenases/reductases (SDR) family.

It is found in the endoplasmic reticulum membrane. Putative oxidoreductase. The protein is Dehydrogenase/reductase SDR family member 7B (dhrs7b) of Danio rerio (Zebrafish).